Here is a 633-residue protein sequence, read N- to C-terminus: Carbon monoxide dehydrogenase 2 (633 aa).

[4Fe-4S] cluster is bound by residues C44, C53, C56, C61, and C73. 5 residues coordinate [Ni-4Fe-5S] cluster: H264, C343, C453, C484, and C525.

It belongs to the Ni-containing carbon monoxide dehydrogenase family. In terms of assembly, homodimer. [4Fe-4S] cluster is required as a cofactor. Requires [Ni-4Fe-5S] cluster as cofactor.

It carries out the reaction CO + 2 oxidized [2Fe-2S]-[ferredoxin] + H2O = 2 reduced [2Fe-2S]-[ferredoxin] + CO2 + 2 H(+). In terms of biological role, CODH oxidizes carbon monoxide coupled, via CooF, to the reduction of a hydrogen cation by a hydrogenase (possibly CooH). This chain is Carbon monoxide dehydrogenase 2 (cooS2), found in Methanosarcina acetivorans (strain ATCC 35395 / DSM 2834 / JCM 12185 / C2A).